The chain runs to 188 residues: Phospholipase A2 inhibitor 31 kDa subunit (188 aa).

8 disulfides stabilise this stretch: C3–C27, C6–C13, C20–C48, C54–C75, C76–C81, C99–C124, C117–C146, and C150–C172. N157 carries an N-linked (GlcNAc...) asparagine glycan.

This sequence belongs to the CNF-like-inhibitor family. As to quaternary structure, heterodimer with phospholipase A2 inhibitor 25 kDa. Post-translationally, N-glycosylated. Expressed by the liver.

Its subcellular location is the secreted. Functionally, inhibits the enzymatic activity of phospholipase A2. The protein is Phospholipase A2 inhibitor 31 kDa subunit of Naja kaouthia (Monocled cobra).